Consider the following 391-residue polypeptide: Thioredoxin-interacting protein (391 aa).

Residue Lys-212 forms a Glycyl lysine isopeptide (Lys-Gly) (interchain with G-Cter in ubiquitin) linkage. At Ser-361 the chain carries Phosphoserine.

The protein belongs to the arrestin family. In terms of assembly, homodimer; disulfide-linked. Interacts with TXN/thioredoxin through its redox-active site. Interacts with transcriptional repressors ZBTB16, ZBTB32 and HDAC1. Interacts with DDIT4. Ubiquitinated; undergoes heterotypic 'Lys-48'-/'Lys-63'-branched polyubiquitination catalyzed by ITCH and UBR5 resulting in proteasomal degradation. Deubiquitinated by USP5, leading to TXNIP stabilization.

It localises to the cytoplasm. In terms of biological role, may act as an oxidative stress mediator by inhibiting thioredoxin activity or by limiting its bioavailability. Interacts with COPS5 and restores COPS5-induced suppression of CDKN1B stability, blocking the COPS5-mediated translocation of CDKN1B from the nucleus to the cytoplasm. Functions as a transcriptional repressor, possibly by acting as a bridge molecule between transcription factors and corepressor complexes, and over-expression will induce G0/G1 cell cycle arrest. Required for the maturation of natural killer cells. Acts as a suppressor of tumor cell growth. Inhibits the proteasomal degradation of DDIT4, and thereby contributes to the inhibition of the mammalian target of rapamycin complex 1 (mTORC1). This is Thioredoxin-interacting protein (TXNIP) from Sus scrofa (Pig).